The following is a 172-amino-acid chain: Conglutin-7 (172 aa).

Residues 1-21 (MAKLTILVALALFLLAAHASA) form the signal peptide. Cystine bridges form between Cys33–Cys116, Cys45–Cys103, Cys104–Cys152, and Cys118–Cys160. Positions 54 to 98 (QRDEDSYGRDPYSPSQDPYSPSQDPDRRDPYSPSPYDRRGAGSSQ) are disordered. Over residues 62–76 (RDPYSPSQDPYSPSQ) the composition is skewed to low complexity. Pro67, Pro74, and Pro86 each carry 4-hydroxyproline. Residues 77–98 (DPDRRDPYSPSPYDRRGAGSSQ) are compositionally biased toward basic and acidic residues.

This sequence belongs to the 2S seed storage albumins family. In terms of processing, the hydroxyproline modifications determined by mass spectrometry are probably 4-hydroxyproline as determined for other extracellular plant proteins. In terms of tissue distribution, expressed in seeds, not expressed in leaves, roots and pegs.

Functionally, weak inhibitor of trypsin. In Arachis hypogaea (Peanut), this protein is Conglutin-7.